A 132-amino-acid chain; its full sequence is Heat shock protein 15 homolog (132 aa).

An S4 RNA-binding domain is found at 11–73 (VRLDKWLWAA…DEREVRVLQV (63 aa)). 2 stretches are compositionally biased toward basic and acidic residues: residues 94-105 (LKKRAENSEARR) and 114-125 (PERRPDKQERRQ). Positions 94–132 (LKKRAENSEARRFNSQFAPSPERRPDKQERRQLIKVKQY) are disordered.

The protein belongs to the HSP15 family.

Functionally, may play an important role in binding of nucleic acid. More specific for RNA. In Aeromonas salmonicida, this protein is Heat shock protein 15 homolog (hslR).